The primary structure comprises 104 residues: Vacuolar ATPase assembly integral membrane protein VMA21 (104 aa).

The Cytoplasmic segment spans residues 1–21 (MSNRVSTGKMAMAPQESVQPA). A helical membrane pass occupies residues 22-42 (VLYKLVLFALLMAVVPIGTYF). The Lumenal segment spans residues 43 to 65 (STLNYLWDGASRCGFPSGLCSTT). A helical membrane pass occupies residues 66-86 (FAAISAIAAANLILVGYVVVA). The Cytoplasmic segment spans residues 87–104 (FREDAASRTGPLPEKKTS). Positions 101 to 104 (KKTS) match the Prevents secretion from ER motif.

The protein belongs to the VMA21 family.

The protein localises to the endoplasmic reticulum membrane. Its subcellular location is the endoplasmic reticulum-Golgi intermediate compartment membrane. It is found in the cytoplasmic vesicle. It localises to the COPII-coated vesicle membrane. Functionally, required for the assembly of the V0 complex of the vacuolar ATPase (V-ATPase) in the endoplasmic reticulum. In Cryptococcus neoformans var. neoformans serotype D (strain B-3501A) (Filobasidiella neoformans), this protein is Vacuolar ATPase assembly integral membrane protein VMA21.